The following is a 603-amino-acid chain: Pentatricopeptide repeat-containing protein At2g02980, chloroplastic (603 aa).

The transit peptide at 1 to 38 (MAISSASLISSFSHAETFTKHSKIDTVNTQNPILLISK) directs the protein to the chloroplast. 10 PPR repeats span residues 93–127 (DIVIFNSMARGYSRFTNPLEVFSLFVEILEDGILP), 128–162 (DNYTFPSLLKACAVAKALEEGRQLHCLSMKLGLDD), 163–193 (NVYVCPTLINMYTECEDVDSARCVFDRIVEP), 194–228 (CVVCYNAMITGYARRNRPNEALSLFREMQGKYLKP), 229–263 (NEITLLSVLSSCALLGSLDLGKWIHKYAKKHSFCK), 264–294 (YVKVNTALIDMFAKCGSLDDAVSIFEKMRYK), 295–329 (DTQAWSAMIVAYANHGKAEKSMLMFERMRSENVQP), 330–365 (DEITFLGLLNACSHTGRVEEGRKYFSQMVSKFGIVP), 366–400 (SIKHYGSMVDLLSRAGNLEDAYEFIDKLPISPTPM), and 432–466 (HGGDYVILSNLYARNKKWEYVDSLRKVMKDRKAVK). A type E motif region spans residues 401-476 (LWRILLAACS…VPGCSSIEVN (76 aa)). The tract at residues 477–507 (NVVHEFFSGDGVKSATTKLHRALDEMVKELK) is type E(+) motif. The type DYW motif stretch occupies residues 508–603 (LSGYVPDTSM…DGKCSCGDFW (96 aa)).

Belongs to the PPR family. PCMP-H subfamily.

Its subcellular location is the plastid. It is found in the chloroplast. Functionally, involved in RNA editing event in chloroplasts. Required for the editing of a single site in ndhD transcript, which is a plastid-encoded subunits of the chloroplast NAD(P)H dehydrogenase (NDH) complex. Not essential for the activity of the NDH complex of the photosynthetic electron transport chain. The protein is Pentatricopeptide repeat-containing protein At2g02980, chloroplastic (PCMP-H26) of Arabidopsis thaliana (Mouse-ear cress).